A 271-amino-acid chain; its full sequence is MATH domain and coiled-coil domain-containing protein At3g27040 (271 aa).

The region spanning 7-133 is the MATH domain; sequence DKKFTWVIKN…NGEVKIVAEV (127 aa). A coiled-coil region spans residues 230-271; sequence KLDWLEKKLKETGKSRLQEIEEDLKDLKVKCADMDALLDFLR.

The sequence is that of MATH domain and coiled-coil domain-containing protein At3g27040 from Arabidopsis thaliana (Mouse-ear cress).